Consider the following 406-residue polypeptide: Formate-dependent phosphoribosylglycinamide formyltransferase (406 aa).

N(1)-(5-phospho-beta-D-ribosyl)glycinamide-binding positions include 28–29 (EL) and glutamate 88. ATP contacts are provided by residues arginine 121, lysine 162, 167–172 (SSGKGQ), 202–205 (EGFI), and glutamate 210. The ATP-grasp domain occupies 126-320 (RLAAEELGCA…EFELHAKAIL (195 aa)). The Mg(2+) site is built by glutamate 279 and glutamate 291. Residues aspartate 298, lysine 367, and 374–375 (RR) each bind N(1)-(5-phospho-beta-D-ribosyl)glycinamide.

The protein belongs to the PurK/PurT family. In terms of assembly, homodimer.

It catalyses the reaction N(1)-(5-phospho-beta-D-ribosyl)glycinamide + formate + ATP = N(2)-formyl-N(1)-(5-phospho-beta-D-ribosyl)glycinamide + ADP + phosphate + H(+). The protein operates within purine metabolism; IMP biosynthesis via de novo pathway; N(2)-formyl-N(1)-(5-phospho-D-ribosyl)glycinamide from N(1)-(5-phospho-D-ribosyl)glycinamide (formate route): step 1/1. Functionally, involved in the de novo purine biosynthesis. Catalyzes the transfer of formate to 5-phospho-ribosyl-glycinamide (GAR), producing 5-phospho-ribosyl-N-formylglycinamide (FGAR). Formate is provided by PurU via hydrolysis of 10-formyl-tetrahydrofolate. This Janthinobacterium sp. (strain Marseille) (Minibacterium massiliensis) protein is Formate-dependent phosphoribosylglycinamide formyltransferase.